We begin with the raw amino-acid sequence, 351 residues long: UDP-3-O-acylglucosamine N-acyltransferase (351 aa).

His-240 serves as the catalytic Proton acceptor.

Belongs to the transferase hexapeptide repeat family. LpxD subfamily. As to quaternary structure, homotrimer.

It catalyses the reaction a UDP-3-O-[(3R)-3-hydroxyacyl]-alpha-D-glucosamine + a (3R)-hydroxyacyl-[ACP] = a UDP-2-N,3-O-bis[(3R)-3-hydroxyacyl]-alpha-D-glucosamine + holo-[ACP] + H(+). It functions in the pathway bacterial outer membrane biogenesis; LPS lipid A biosynthesis. Functionally, catalyzes the N-acylation of UDP-3-O-acylglucosamine using 3-hydroxyacyl-ACP as the acyl donor. Is involved in the biosynthesis of lipid A, a phosphorylated glycolipid that anchors the lipopolysaccharide to the outer membrane of the cell. The protein is UDP-3-O-acylglucosamine N-acyltransferase of Pseudomonas putida (strain ATCC 47054 / DSM 6125 / CFBP 8728 / NCIMB 11950 / KT2440).